A 671-amino-acid polypeptide reads, in one-letter code: Archaeal Rqc2 homolog aRqcH (671 aa).

Coiled coils occupy residues 291–363 and 410–465; these read KVVV…ARIK and RKNA…MQMK.

This sequence belongs to the NEMF family. Associates with stalled 50S ribosomal subunits.

Its function is as follows. Probably part of the ribosome quality control system (RQC). May mediate the addition of alanine residues (Ala tailing) to incompletely synthesized nascent chains from stalled ribosomes, leading to their degradation. This is Archaeal Rqc2 homolog aRqcH from Methanocaldococcus jannaschii (strain ATCC 43067 / DSM 2661 / JAL-1 / JCM 10045 / NBRC 100440) (Methanococcus jannaschii).